The chain runs to 150 residues: Large ribosomal subunit protein bL9 (150 aa).

This sequence belongs to the bacterial ribosomal protein bL9 family.

Binds to the 23S rRNA. This chain is Large ribosomal subunit protein bL9, found in Janthinobacterium sp. (strain Marseille) (Minibacterium massiliensis).